The primary structure comprises 217 residues: Large ribosomal subunit protein uL29m (217 aa).

Belongs to the universal ribosomal protein uL29 family. In terms of assembly, component of the mitochondrial large ribosomal subunit. Mature mitochondrial ribosomes consist of a small (37S) and a large (54S) subunit. The 37S subunit contains at least 33 different proteins and 1 molecule of RNA (15S). The 54S subunit contains at least 45 different proteins and 1 molecule of RNA (21S).

The protein localises to the mitochondrion. This Neosartorya fischeri (strain ATCC 1020 / DSM 3700 / CBS 544.65 / FGSC A1164 / JCM 1740 / NRRL 181 / WB 181) (Aspergillus fischerianus) protein is Large ribosomal subunit protein uL29m (mrpl4).